The following is a 217-amino-acid chain: Ribonuclease HII (217 aa).

An RNase H type-2 domain is found at 27–216 (SRIAGVDEAG…VKESIREGIC (190 aa)). Residues Asp33, Glu34, and Asp126 each coordinate a divalent metal cation.

Belongs to the RNase HII family. Requires Mn(2+) as cofactor. Mg(2+) is required as a cofactor.

Its subcellular location is the cytoplasm. It carries out the reaction Endonucleolytic cleavage to 5'-phosphomonoester.. Functionally, endonuclease that specifically degrades the RNA of RNA-DNA hybrids. This is Ribonuclease HII (rnhB) from Chlamydia muridarum (strain MoPn / Nigg).